Reading from the N-terminus, the 276-residue chain is MAIRLYRAYSPGTRSRSSVYYTDITQQKPEKSLVFGKKACSGRNNRGIITLKGRGGAHKRKHRIIDFKRKSIATTARVATIEYDPNRNARIALLHYENGLKRYILAPRSLKVGMEVCSGPEAPIEIGNSLPLAAIPLGSTVHNIELTLGKGGQIARSAGTYAQIIAKEGDFVTLKLPSNEVRLVYKECYATLGQVGNIDAINTCLGKAGRSRWLGKRPKVRGVVKNPIDHPHGGGEGRSPIGRAKPVTPWGQPALGIKTRKKTKASGRYILRGRTK.

The tract at residues 223-254 (VVKNPIDHPHGGGEGRSPIGRAKPVTPWGQPA) is disordered.

It belongs to the universal ribosomal protein uL2 family. Part of the 50S ribosomal subunit.

It localises to the plastid. It is found in the chloroplast. The chain is Large ribosomal subunit protein uL2c (rpl2) from Emiliania huxleyi (Coccolithophore).